The chain runs to 347 residues: GTPase Obg (347 aa).

The region spanning 1-159 (MKFVDEATIK…RVLRLELKLL (159 aa)) is the Obg domain. Residues 127–146 (NTRYKTSTNRAPRQSKPGTP) are disordered. Over residues 129-138 (RYKTSTNRAP) the composition is skewed to polar residues. In terms of domain architecture, OBG-type G spans 160 to 334 (ADVGLLGLPN…LMQAIMKYLE (175 aa)). GTP-binding positions include 166-173 (GLPNAGKS), 191-195 (FTTLY), 213-216 (DIPG), 284-287 (NKID), and 315-317 (SAA). Positions 173 and 193 each coordinate Mg(2+).

This sequence belongs to the TRAFAC class OBG-HflX-like GTPase superfamily. OBG GTPase family. In terms of assembly, monomer. Mg(2+) is required as a cofactor.

It is found in the cytoplasm. Functionally, an essential GTPase which binds GTP, GDP and possibly (p)ppGpp with moderate affinity, with high nucleotide exchange rates and a fairly low GTP hydrolysis rate. Plays a role in control of the cell cycle, stress response, ribosome biogenesis and in those bacteria that undergo differentiation, in morphogenesis control. This Thioalkalivibrio sulfidiphilus (strain HL-EbGR7) protein is GTPase Obg.